We begin with the raw amino-acid sequence, 823 residues long: Lon protease (823 aa).

Positions 22 to 217 (LPLLPVRDVV…KVNEHLNKEH (196 aa)) constitute a Lon N-terminal domain. 369-376 (GPPGVGKT) contacts ATP. The Lon proteolytic domain maps to 605-786 (KNEVGIVTGL…DDVLAVALET (182 aa)). Residues serine 692 and lysine 735 contribute to the active site. Residues 788-823 (PPPPPASEGKPAATVKAPPRRGIAAPRKGAMAGAKS) form a disordered region.

It belongs to the peptidase S16 family. As to quaternary structure, homohexamer. Organized in a ring with a central cavity.

It localises to the cytoplasm. It carries out the reaction Hydrolysis of proteins in presence of ATP.. Functionally, ATP-dependent serine protease that mediates the selective degradation of mutant and abnormal proteins as well as certain short-lived regulatory proteins. Required for cellular homeostasis and for survival from DNA damage and developmental changes induced by stress. Degrades polypeptides processively to yield small peptide fragments that are 5 to 10 amino acids long. Binds to DNA in a double-stranded, site-specific manner. This is Lon protease from Geobacter metallireducens (strain ATCC 53774 / DSM 7210 / GS-15).